The following is a 344-amino-acid chain: Sensor histidine kinase GraS (344 aa).

Helical transmembrane passes span 18-38 (IFWIVFLHLILLGMAYIDYDI) and 43-63 (IGFIVTLNLGLTAMFLIFTFL). The 207-residue stretch at 126 to 332 (EFVHDIKTPV…TFVLTFPKQN (207 aa)) folds into the Histidine kinase domain. Phosphohistidine; by autocatalysis is present on histidine 129.

Post-translationally, autophosphorylated.

The protein localises to the cell membrane. It carries out the reaction ATP + protein L-histidine = ADP + protein N-phospho-L-histidine.. Member of the two-component regulatory system GraR/GraS involved in resistance against cationic antimicrobial peptides (CAMPs). GraS probably functions as a sensor protein kinase which is autophosphorylated at a histidine residue and transfers its phosphate group to GraR. This chain is Sensor histidine kinase GraS (graS), found in Staphylococcus haemolyticus (strain JCSC1435).